Here is a 62-residue protein sequence, read N- to C-terminus: Potassium channel toxin gamma-KTx 1.1 (62 aa).

A signal peptide spans 1-20; it reads MKVLILIMIIASLMIMGVEM. 4 disulfide bridges follow: C25-C43, C31-C54, C40-C59, and C44-C61.

This sequence belongs to the ergtoxin family. Gamma-KTx 1 subfamily. In terms of processing, after protein storage at -20 Celsius degrees during a couple of months, the Met-55 of a small number of toxins is naturally oxidized. This oxidized form is about three orders of magnitude less efficient (IC(50)=15 uM) than non-oxidized form. Expressed by the venom gland.

It is found in the secreted. In terms of biological role, blocks human and rat Kv11.1/KCNH2/ERG1 and Kv11.3/KCNH7/ERG3, as well as rat (but not human) Kv11.2/KCNH6/ERG2 by binding to channel outer vestibule (S5P domain) with a 1:1 stoichiometry. Inhibition data are the following: hERG1 (reversible, IC(50)~7 nM), rERG1 (reversible, Kd=6.8 nM), rERG2 (irreversible, Kd=2.8 nM), hERG3 (irreversible, Kd=4.05 nM) and rERG3 (reversible, Kd=38.1 nM) potassium channels. The toxin potency is not affected by elevating potassium ion concentration from 2 to 98 mM. This toxin only blocks channels in a closed state. At high toxin concentrations, block of Kv11.1/KCNH2/ERG1 macroscopic current is incomplete (93.5%). This suggests a kinetic mechanism model with two different states of toxin-channel binding (T+C=TC*=TC; in the TC* state, the toxin binds the channel but does not occlude the pore, whereas in the TC state the toxin binds and occludes the pore). In this model, incomplete block is explained by the relatively fast dissociation rate from the blocked channel conformation (TC) relative to the rate of conversion of the toxin-channel encounter complex (TC*) to the blocked channel conformation (TC). The sequence is that of Potassium channel toxin gamma-KTx 1.1 from Centruroides noxius (Mexican scorpion).